Consider the following 241-residue polypeptide: MKVLLVFDFDNTIIDDNSDTWIVQCAPDKKLPIELQDSYQKGLWTEFMGRVFKYLRDEGVKADELKRAVTSLPFTSGMIELLSFLRMNKDRFDCIIISDSNSIFIDWVLEAAAFHDVFDHVFTNPASFDSSGRLTVKNYHAHSCTRCPKNLCKNTVLGEFIDKQLQKGVRYTRIVYIGDGGNDVCPVTFLKKNDVAMPREGYTLHRTLAKMSQNLEPMESSIVVWSSGVEIISHLQFLIKM.

The active-site Nucleophile is the Asp-8. Residues Asp-8 and Asp-10 each contribute to the Mg(2+) site. Asp-10 functions as the Proton donor in the catalytic mechanism. Residues Asp-19 and Asp-99 each contribute to the substrate site. Asp-179 contributes to the Mg(2+) binding site.

Belongs to the HAD-like hydrolase superfamily. PHOSPHO family. The cofactor is Mg(2+).

It carries out the reaction pyridoxal 5'-phosphate + H2O = pyridoxal + phosphate. Phosphatase that has high activity toward pyridoxal 5'-phosphate (PLP). Also active at much lower level toward pyrophosphate, phosphoethanolamine (PEA), phosphocholine (PCho), phospho-l-tyrosine, fructose-6-phosphate, p-nitrophenyl phosphate, and h-glycerophosphate. The sequence is that of Pyridoxal phosphate phosphatase PHOSPHO2 (Phospho2) from Mus musculus (Mouse).